Reading from the N-terminus, the 546-residue chain is CTP synthase (546 aa).

Positions 1 to 266 (MTTNYIFVTG…DDLVCQRFGI (266 aa)) are amidoligase domain. S14 contacts CTP. S14 is a binding site for UTP. ATP is bound by residues 15 to 20 (SLGKGI) and D72. Mg(2+) contacts are provided by D72 and E140. Residues 147–149 (DIE), 187–192 (KTKPTQ), and K223 contribute to the CTP site. Residues 187–192 (KTKPTQ) and K223 each bind UTP. 239-241 (KDV) is an ATP binding site. The Glutamine amidotransferase type-1 domain maps to 291 to 542 (TIGMVGKYIE…VKAAGENARG (252 aa)). G352 serves as a coordination point for L-glutamine. C379 acts as the Nucleophile; for glutamine hydrolysis in catalysis. L-glutamine-binding positions include 380–383 (LGMQ), E403, and R470. Active-site residues include H515 and E517.

Belongs to the CTP synthase family. In terms of assembly, homotetramer.

The catalysed reaction is UTP + L-glutamine + ATP + H2O = CTP + L-glutamate + ADP + phosphate + 2 H(+). It catalyses the reaction L-glutamine + H2O = L-glutamate + NH4(+). The enzyme catalyses UTP + NH4(+) + ATP = CTP + ADP + phosphate + 2 H(+). The protein operates within pyrimidine metabolism; CTP biosynthesis via de novo pathway; CTP from UDP: step 2/2. Its activity is regulated as follows. Allosterically activated by GTP, when glutamine is the substrate; GTP has no effect on the reaction when ammonia is the substrate. The allosteric effector GTP functions by stabilizing the protein conformation that binds the tetrahedral intermediate(s) formed during glutamine hydrolysis. Inhibited by the product CTP, via allosteric rather than competitive inhibition. Its function is as follows. Catalyzes the ATP-dependent amination of UTP to CTP with either L-glutamine or ammonia as the source of nitrogen. Regulates intracellular CTP levels through interactions with the four ribonucleotide triphosphates. The polypeptide is CTP synthase (Aliivibrio salmonicida (strain LFI1238) (Vibrio salmonicida (strain LFI1238))).